Consider the following 1262-residue polypeptide: Structural maintenance of chromosomes protein 1 (1262 aa).

The stretch at 171-497 forms a coiled coil; it reads SRSHEFQAEY…VAVVRQLSEA (327 aa). The region spanning 524-642 is the SMC hinge domain; it reads SVYGRLVDLC…ESQEDAKQLA (119 aa). Residues 680 to 937 adopt a coiled-coil conformation; sequence KKWDEKVVKQ…RLESLLTKKQ (258 aa). A disordered region spans residues 965–994; that stretch reads EYEEDDGDDTASQSSQSATDGPSVSEEQIQ. The segment covering 974-991 has biased composition (polar residues); that stretch reads TASQSSQSATDGPSVSEE. Residues 1017–1086 adopt a coiled-coil conformation; sequence DGVRQMSNRL…QQFEKVKTDR (70 aa). Residues 1148–1183 carry the DA-box motif; that stretch reads LSGGEKTIAALALLFAVHGRNPAPFFVLDEIDAALD.

Belongs to the SMC family. SMC1 subfamily. In terms of assembly, component of the cohesin complex, composed of the smc-1 and smc-3 heterodimer attached via their SMC hinge domain, scc-1 which links them, and scc-3. Interacts with smc-3, scc-1, scc-3 and tim-1.

It localises to the nucleus. The protein resides in the chromosome. Functionally, involved in chromosome cohesion during cell cycle and in DNA repair. Required for chromosome segregation during mitosis. Central component of cohesin complex. The cohesin complex is required for the cohesion of sister chromatids after DNA replication. The cohesin complex apparently forms a large proteinaceous ring within which sister chromatids can be trapped. At anaphase, the complex is cleaved and dissociates from chromatin, allowing sister chromatids to segregate. The sequence is that of Structural maintenance of chromosomes protein 1 from Caenorhabditis elegans.